A 628-amino-acid chain; its full sequence is Forkhead box protein O (628 aa).

Phosphothreonine; by PKB/AKT1 is present on Thr50. At Ser81 the chain carries Phosphoserine. Positions 101–207 (WGNLSYADLI…ETSRYEKRRG (107 aa)) form a DNA-binding region, fork-head. 2 disordered regions span residues 188–210 (KSVR…GRAK) and 223–270 (GLND…SSCG). Residue Ser196 is modified to Phosphoserine; by PKB/AKT1. 2 stretches are compositionally biased toward polar residues: residues 227–236 (ATPSPSSSVS) and 261–270 (RASSNASSCG). Ser264 is modified (phosphoserine; by PKB/AKT1). Residues Ser267, Ser268, and Ser273 each carry the phosphoserine modification. Disordered regions lie at residues 327–373 (SAAS…SLQP) and 398–451 (NSVT…QQQQ). The span at 334 to 343 (TQPPPPPYPA) shows a compositional bias: pro residues. A compositionally biased stretch (low complexity) spans 344-359 (PQQQQQQQPQQQQAYT). Positions 411-423 (SEPSSDSLNTYSN) are enriched in polar residues. Residues 438–451 (QQQRQQQQQQQQQQ) are compositionally biased toward low complexity.

In terms of assembly, interacts with melt.

It localises to the cytoplasm. The protein localises to the nucleus. Transcription factor involved in the regulation of the insulin signaling pathway. Consistently activates both the downstream target Thor\d4EBP and the feedback control target InR. Involved in negative regulation of the cell cycle, modulating cell growth and proliferation. In response to cellular stresses, such as nutrient deprivation or increased levels of reactive oxygen species, foxo is activated and inhibits growth through the action of target genes such as Thor. Foxo activated in the adult fat body can regulate lifespan in adults; an insulin peptide itself may function as one secondary messenger of insulin-regulated aging. Also regulates Lip4, homolog of human acid lipases, thereby acting as a key modulator of lipid metabolism by insulin signaling and integrates insulin responses to glucose and lipid homeostasis. This is Forkhead box protein O from Drosophila willistoni (Fruit fly).